Consider the following 204-residue polypeptide: Regulatory protein RecX (204 aa).

Polar residues predominate over residues 1-22 (MTKSSRPQSISDSVSVAGSQGT). Residues 1-44 (MTKSSRPQSISDSVSVAGSQGTLDDLRARVASVPEAPTREPVDS) are disordered.

This sequence belongs to the RecX family.

It is found in the cytoplasm. Its function is as follows. Modulates RecA activity. This chain is Regulatory protein RecX, found in Mycobacteroides abscessus (strain ATCC 19977 / DSM 44196 / CCUG 20993 / CIP 104536 / JCM 13569 / NCTC 13031 / TMC 1543 / L948) (Mycobacterium abscessus).